A 410-amino-acid polypeptide reads, in one-letter code: Aspartate aminotransferase (410 aa).

Residues Gly47, Trp135, and Asn185 each coordinate L-aspartate. At Lys249 the chain carries N6-(pyridoxal phosphate)lysine. L-aspartate is bound at residue Arg385.

The protein belongs to the class-I pyridoxal-phosphate-dependent aminotransferase family. As to quaternary structure, homodimer. Requires pyridoxal 5'-phosphate as cofactor.

Its subcellular location is the cytoplasm. The enzyme catalyses L-aspartate + 2-oxoglutarate = oxaloacetate + L-glutamate. It catalyses the reaction L-2-aminoadipate + 2-oxoglutarate = 2-oxoadipate + L-glutamate. Its function is as follows. Catalyzes the reversible conversion of aspartate and 2-oxoglutarate to glutamate and oxaloacetate. Genetic evidence shows that this protein is involved in L-lysine catabolism. It may have 2-aminoadipate:2-oxoglutarate aminotransferase activity. This chain is Aspartate aminotransferase (aatB), found in Rhizobium meliloti (strain 1021) (Ensifer meliloti).